Here is a 129-residue protein sequence, read N- to C-terminus: MSATRYRRFLKLCEEWPKDESKKGRDLGTFLRQRVASAFREGENTQISDPEKCDQMYESLARINSNVYKEKFPRAKDTSFTGVTVEECRLLLATGSMQQTDEEKKGLWKTLMERFSSKPEDVPPEKAEK.

The transit peptide at 1–13 (MSATRYRRFLKLC) directs the protein to the mitochondrion.

It is found in the mitochondrion matrix. It localises to the mitochondrion nucleoid. The protein resides in the mitochondrion. Required for the assembly of the ubiquinol-cytochrome c reductase complex (mitochondrial respiratory chain complex III or cytochrome b-c1 complex). May play a role in the modulation of respiratory chain activities such as oxygen consumption and ATP production. May be involved in cytochrome b translation and/or stability. This is Ubiquinol-cytochrome-c reductase complex assembly factor 2 (uqcc2) from Danio rerio (Zebrafish).